The following is a 112-amino-acid chain: Putative pterin-4-alpha-carbinolamine dehydratase (112 aa).

This sequence belongs to the pterin-4-alpha-carbinolamine dehydratase family.

The enzyme catalyses (4aS,6R)-4a-hydroxy-L-erythro-5,6,7,8-tetrahydrobiopterin = (6R)-L-erythro-6,7-dihydrobiopterin + H2O. The protein is Putative pterin-4-alpha-carbinolamine dehydratase of Shewanella putrefaciens (strain CN-32 / ATCC BAA-453).